We begin with the raw amino-acid sequence, 213 residues long: Pyridoxine/pyridoxamine 5'-phosphate oxidase (213 aa).

FMN-binding positions include 60–65 (RMVLMK), 75–76 (YS), lysine 82, and glutamine 104. Position 65 (lysine 65) interacts with substrate. 2 residues coordinate substrate: tyrosine 122 and arginine 126. Residues 139–140 (QS) and tryptophan 184 contribute to the FMN site. 190-192 (RLH) serves as a coordination point for substrate. FMN is bound at residue arginine 194.

It belongs to the pyridoxamine 5'-phosphate oxidase family. As to quaternary structure, homodimer. FMN serves as cofactor.

The enzyme catalyses pyridoxamine 5'-phosphate + O2 + H2O = pyridoxal 5'-phosphate + H2O2 + NH4(+). It catalyses the reaction pyridoxine 5'-phosphate + O2 = pyridoxal 5'-phosphate + H2O2. It participates in cofactor metabolism; pyridoxal 5'-phosphate salvage; pyridoxal 5'-phosphate from pyridoxamine 5'-phosphate: step 1/1. The protein operates within cofactor metabolism; pyridoxal 5'-phosphate salvage; pyridoxal 5'-phosphate from pyridoxine 5'-phosphate: step 1/1. Functionally, catalyzes the oxidation of either pyridoxine 5'-phosphate (PNP) or pyridoxamine 5'-phosphate (PMP) into pyridoxal 5'-phosphate (PLP). The polypeptide is Pyridoxine/pyridoxamine 5'-phosphate oxidase (Bradyrhizobium diazoefficiens (strain JCM 10833 / BCRC 13528 / IAM 13628 / NBRC 14792 / USDA 110)).